Here is a 206-residue protein sequence, read N- to C-terminus: Small ribosomal subunit protein uS4 (206 aa).

In terms of domain architecture, S4 RNA-binding spans 98–164 (MRLDNVVYRL…EKFKTFIENP (67 aa)).

Belongs to the universal ribosomal protein uS4 family. In terms of assembly, part of the 30S ribosomal subunit. Contacts protein S5. The interaction surface between S4 and S5 is involved in control of translational fidelity.

In terms of biological role, one of the primary rRNA binding proteins, it binds directly to 16S rRNA where it nucleates assembly of the body of the 30S subunit. Functionally, with S5 and S12 plays an important role in translational accuracy. This chain is Small ribosomal subunit protein uS4, found in Clostridium tetani (strain Massachusetts / E88).